Consider the following 341-residue polypeptide: MATIKDVAKHAGVSTTTVSHVINKTRFVAEDTKAAVWAAIKALNYSPSAVARSLKVNHTKSIGLLATSSEAPYFAEIIESVENSCYSKGYTLILCNSHNNIDKQKAYLAMLAQKRVDGLLIMCSEYPEQLLGMLEDYRNIPMVVMDWGQARSDFTDTIIDNAFHGGYLAGRYLIERGHRDIGAIPGPLARNTGGGRHQGFLKALKEANIPIKEEWVIQGDFEPESGYKAMHQILNQKQRPTAVFCGGDVMAMGAICAADELGLRVPQDISVIGYDNIRNARYFSPALTTIHQPKERLGQMAFSMLLDRIINKREDAQTIEVHPRLVERRSVVDGPFVDYRR.

The 55-residue stretch at 2–56 folds into the HTH lacI-type domain; the sequence is ATIKDVAKHAGVSTTTVSHVINKTRFVAEDTKAAVWAAIKALNYSPSAVARSLKV. The H-T-H motif DNA-binding region spans 4–23; sequence IKDVAKHAGVSTTTVSHVIN. A DNA-binding region spans residues 48-56; sequence SAVARSLKV. 5 residues coordinate hypoxanthine: Tyr-73, Arg-190, Thr-192, Phe-221, and Asp-275.

In terms of assembly, homodimer.

Its pathway is purine metabolism; purine nucleotide biosynthesis [regulation]. In terms of biological role, is the main repressor of the genes involved in the de novo synthesis of purine nucleotides, regulating purB, purC, purEK, purF, purHD, purL, purMN and guaBA expression. PurR is allosterically activated to bind its cognate DNA by binding the purine corepressors, hypoxanthine or guanine, thereby effecting transcription repression. The chain is HTH-type transcriptional repressor PurR from Photorhabdus laumondii subsp. laumondii (strain DSM 15139 / CIP 105565 / TT01) (Photorhabdus luminescens subsp. laumondii).